The primary structure comprises 1434 residues: Inositol hexakisphosphate and diphosphoinositol-pentakisphosphate kinase 1 (1434 aa).

66–67 (KK) provides a ligand contact to substrate. ATP contacts are provided by residues R147, K200, H207, R226, 250-253 (EEFM), and 259-261 (DVK). Substrate is bound at residue 226 to 227 (RK). Substrate is bound by residues K261 and R275. ATP-binding positions include S277, D322, and 334-336 (DVN). Residue 339–342 (SFVK) participates in substrate binding. The segment at 384 to 455 (PTTSGTMMEL…VLDITRLLLA (72 aa)) is polyphosphoinositide-binding domain. A disordered region spans residues 916-1017 (EGSAPAGCGF…PTEMKQSGLG (102 aa)). Residues S941 and S984 each carry the phosphoserine modification. Residues 1002-1017 (FSSSRPPTEMKQSGLG) are compositionally biased toward polar residues. Residues S1034, S1070, S1142, and S1149 each carry the phosphoserine modification. Disordered stretches follow at residues 1133–1193 (NHQA…GFSD), 1228–1251 (ESTQ…DTEV), and 1396–1434 (TDNP…EDIS). A compositionally biased stretch (low complexity) spans 1165 to 1183 (SSGPSSTVSSAGPSSPTTV). A compositionally biased stretch (acidic residues) spans 1403 to 1434 (LSEETDLQAQEVSEEIDQEPEVVDELSNEDIS).

The protein belongs to the histidine acid phosphatase family. VIP1 subfamily.

It localises to the cytoplasm. The protein localises to the cytosol. It is found in the cell membrane. The catalysed reaction is 1D-myo-inositol hexakisphosphate + ATP = 1-diphospho-1D-myo-inositol 2,3,4,5,6-pentakisphosphate + ADP. It catalyses the reaction 5-diphospho-1D-myo-inositol 1,2,3,4,6-pentakisphosphate + ATP + H(+) = 1,5-bis(diphospho)-1D-myo-inositol 2,3,4,6-tetrakisphosphate + ADP. In terms of biological role, bifunctional inositol kinase that acts in concert with the IP6K kinases IP6K1, IP6K2 and IP6K3 to synthesize the diphosphate group-containing inositol pyrophosphates diphosphoinositol pentakisphosphate, PP-InsP5, and bis-diphosphoinositol tetrakisphosphate, (PP)2-InsP4. PP-InsP5 and (PP)2-InsP4, also respectively called InsP7 and InsP8, regulate a variety of cellular processes, including apoptosis, vesicle trafficking, cytoskeletal dynamics, exocytosis, insulin signaling and neutrophil activation. Phosphorylates inositol hexakisphosphate (InsP6) at position 1 to produce PP-InsP5 which is in turn phosphorylated by IP6Ks to produce (PP)2-InsP4. Alternatively, phosphorylates PP-InsP5 at position 1, produced by IP6Ks from InsP6, to produce (PP)2-InsP4. Activated when cells are exposed to hyperosmotic stress. The chain is Inositol hexakisphosphate and diphosphoinositol-pentakisphosphate kinase 1 from Rattus norvegicus (Rat).